Here is a 324-residue protein sequence, read N- to C-terminus: UDP-N-acetylenolpyruvoylglucosamine reductase (324 aa).

One can recognise an FAD-binding PCMH-type domain in the interval 36–203 (FRAGGLAELM…TSVLFEGYPE (168 aa)). The active site involves R183. The active-site Proton donor is the S232. E302 is an active-site residue.

It belongs to the MurB family. Requires FAD as cofactor.

Its subcellular location is the cytoplasm. The enzyme catalyses UDP-N-acetyl-alpha-D-muramate + NADP(+) = UDP-N-acetyl-3-O-(1-carboxyvinyl)-alpha-D-glucosamine + NADPH + H(+). It participates in cell wall biogenesis; peptidoglycan biosynthesis. Its function is as follows. Cell wall formation. The chain is UDP-N-acetylenolpyruvoylglucosamine reductase from Rhizobium johnstonii (strain DSM 114642 / LMG 32736 / 3841) (Rhizobium leguminosarum bv. viciae).